We begin with the raw amino-acid sequence, 83 residues long: Short neurotoxin 1 (83 aa).

An N-terminal signal peptide occupies residues 1–21 (MKTLLLTLVVVTIVCLDLGYT). Intrachain disulfides connect C24–C45, C38–C62, C64–C75, and C76–C81.

The protein belongs to the three-finger toxin family. Short-chain subfamily. Type I alpha-neurotoxin sub-subfamily. Expressed by the venom gland.

The protein localises to the secreted. Its function is as follows. Binds to muscle nicotinic acetylcholine receptor (nAChR) and inhibit acetylcholine from binding to the receptor, thereby impairing neuromuscular transmission. In Pseudechis australis (Mulga snake), this protein is Short neurotoxin 1.